The chain runs to 674 residues: tRNA 5-methylaminomethyl-2-thiouridine biosynthesis bifunctional protein MnmC (674 aa).

Residues 1–246 (MFIMSSISHA…KREMIAGSLS (246 aa)) are tRNA (mnm(5)s(2)U34)-methyltransferase. The segment at 272-674 (IGGGIASATL…RKGKALTQKV (403 aa)) is FAD-dependent cmnm(5)s(2)U34 oxidoreductase.

This sequence in the N-terminal section; belongs to the methyltransferase superfamily. tRNA (mnm(5)s(2)U34)-methyltransferase family. It in the C-terminal section; belongs to the DAO family. It depends on FAD as a cofactor.

It localises to the cytoplasm. The catalysed reaction is 5-aminomethyl-2-thiouridine(34) in tRNA + S-adenosyl-L-methionine = 5-methylaminomethyl-2-thiouridine(34) in tRNA + S-adenosyl-L-homocysteine + H(+). Its function is as follows. Catalyzes the last two steps in the biosynthesis of 5-methylaminomethyl-2-thiouridine (mnm(5)s(2)U) at the wobble position (U34) in tRNA. Catalyzes the FAD-dependent demodification of cmnm(5)s(2)U34 to nm(5)s(2)U34, followed by the transfer of a methyl group from S-adenosyl-L-methionine to nm(5)s(2)U34, to form mnm(5)s(2)U34. The protein is tRNA 5-methylaminomethyl-2-thiouridine biosynthesis bifunctional protein MnmC of Vibrio cholerae serotype O1 (strain ATCC 39315 / El Tor Inaba N16961).